Reading from the N-terminus, the 462-residue chain is Cytochrome c biogenesis protein CcsB (462 aa).

3 consecutive transmembrane segments (helical) span residues 30–50 (LRVAIALLLLISVFSILGTVI), 89–109 (TWWYLVLLLAFGVSLIACTFR), and 175–195 (IGPIIVHIGMIVTLVGSIWGA).

It belongs to the Ccs1/CcsB family. May interact with CcsA.

The protein localises to the cellular thylakoid membrane. In terms of biological role, required during biogenesis of c-type cytochromes (cytochrome c6 and cytochrome f) at the step of heme attachment. This Picosynechococcus sp. (strain ATCC 27264 / PCC 7002 / PR-6) (Agmenellum quadruplicatum) protein is Cytochrome c biogenesis protein CcsB.